The following is a 289-amino-acid chain: 4-diphosphocytidyl-2-C-methyl-D-erythritol kinase (289 aa).

Lys-13 is an active-site residue. 101–111 (PMGGGLGGGSS) provides a ligand contact to ATP. The active site involves Asp-143.

Belongs to the GHMP kinase family. IspE subfamily.

It carries out the reaction 4-CDP-2-C-methyl-D-erythritol + ATP = 4-CDP-2-C-methyl-D-erythritol 2-phosphate + ADP + H(+). The protein operates within isoprenoid biosynthesis; isopentenyl diphosphate biosynthesis via DXP pathway; isopentenyl diphosphate from 1-deoxy-D-xylulose 5-phosphate: step 3/6. Catalyzes the phosphorylation of the position 2 hydroxy group of 4-diphosphocytidyl-2C-methyl-D-erythritol. In Janthinobacterium sp. (strain Marseille) (Minibacterium massiliensis), this protein is 4-diphosphocytidyl-2-C-methyl-D-erythritol kinase.